Reading from the N-terminus, the 1031-residue chain is Putative protein TIC 214 N-terminal part (1031 aa).

A run of 6 helical transmembrane segments spans residues 11-31, 68-88, 92-112, 127-147, 166-186, and 212-232; these read ILWA…LFGL, TLGQ…IMLL, AITL…KDLS, GIIQ…ILLP, SFFV…LINL, and TFSI…PVPF.

The protein belongs to the TIC214 family. In terms of assembly, part of the Tic complex.

Its subcellular location is the plastid. It is found in the chloroplast inner membrane. In terms of biological role, involved in protein precursor import into chloroplasts. May be part of an intermediate translocation complex acting as a protein-conducting channel at the inner envelope. The protein is Putative protein TIC 214 N-terminal part of Anthoceros angustus (Hornwort).